Consider the following 211-residue polypeptide: MRNIQIALTKGRLEKHVIPLFEQIGIDCSELKNKGRKLVFQSKNTDISFILVKAVDVATYVEHGVADIGVVGKDILMENEKDIYEMLDLGVGVCKFCVASIPTYNPKSYRKKCIATKYPHITSNYFHDKGEDVEIIKIEGSVEIAPILGLADAIVDIVETGKTLQENGLIVFEEMYSISARMIVNKAALKTKKDEIFSIINMMEQEILSGK.

Belongs to the ATP phosphoribosyltransferase family. Short subfamily. In terms of assembly, heteromultimer composed of HisG and HisZ subunits.

It localises to the cytoplasm. The enzyme catalyses 1-(5-phospho-beta-D-ribosyl)-ATP + diphosphate = 5-phospho-alpha-D-ribose 1-diphosphate + ATP. It participates in amino-acid biosynthesis; L-histidine biosynthesis; L-histidine from 5-phospho-alpha-D-ribose 1-diphosphate: step 1/9. Its function is as follows. Catalyzes the condensation of ATP and 5-phosphoribose 1-diphosphate to form N'-(5'-phosphoribosyl)-ATP (PR-ATP). Has a crucial role in the pathway because the rate of histidine biosynthesis seems to be controlled primarily by regulation of HisG enzymatic activity. The sequence is that of ATP phosphoribosyltransferase from Bacillus cereus (strain AH187).